Reading from the N-terminus, the 499-residue chain is Bifunctional purine biosynthesis protein PurH (499 aa).

The 144-residue stretch at 1–144 (MIKRALISVF…KNFKDVVVLT (144 aa)) folds into the MGS-like domain.

Belongs to the PurH family.

It catalyses the reaction (6R)-10-formyltetrahydrofolate + 5-amino-1-(5-phospho-beta-D-ribosyl)imidazole-4-carboxamide = 5-formamido-1-(5-phospho-D-ribosyl)imidazole-4-carboxamide + (6S)-5,6,7,8-tetrahydrofolate. The catalysed reaction is IMP + H2O = 5-formamido-1-(5-phospho-D-ribosyl)imidazole-4-carboxamide. It functions in the pathway purine metabolism; IMP biosynthesis via de novo pathway; 5-formamido-1-(5-phospho-D-ribosyl)imidazole-4-carboxamide from 5-amino-1-(5-phospho-D-ribosyl)imidazole-4-carboxamide (10-formyl THF route): step 1/1. It participates in purine metabolism; IMP biosynthesis via de novo pathway; IMP from 5-formamido-1-(5-phospho-D-ribosyl)imidazole-4-carboxamide: step 1/1. The polypeptide is Bifunctional purine biosynthesis protein PurH (Clostridium botulinum (strain 657 / Type Ba4)).